A 197-amino-acid chain; its full sequence is MSRYRGPRFKKIRRLGALPGLTNKSPRAIRDLRNQSRSEYRIRLEEKQKLRFHYGLTEKQLINYVRIARKAKGSTGKVLLQLLEMRLDNILFRLGMASTIPAARQLVNHRHVLVNGRLVDRPSYRCKPRDIIMPKNTTKSGVLVQNSLQLFTGKELATHLNLFSTPYKGLVNKIVDTNWIGLKINELLVVEYYSRQT.

The region spanning 85-157 (MRLDNILFRL…LQLFTGKELA (73 aa)) is the S4 RNA-binding domain.

It belongs to the universal ribosomal protein uS4 family. In terms of assembly, part of the 30S ribosomal subunit. Contacts protein S5. The interaction surface between S4 and S5 is involved in control of translational fidelity.

It localises to the plastid. In terms of biological role, one of the primary rRNA binding proteins, it binds directly to 16S rRNA where it nucleates assembly of the body of the 30S subunit. With S5 and S12 plays an important role in translational accuracy. The chain is Small ribosomal subunit protein uS4c (rps4) from Cuscuta gronovii (Common dodder).